The sequence spans 60 residues: Large ribosomal subunit protein uL30 (60 aa).

This sequence belongs to the universal ribosomal protein uL30 family. As to quaternary structure, part of the 50S ribosomal subunit.

The polypeptide is Large ribosomal subunit protein uL30 (Streptomyces filamentosus (Streptomyces roseosporus)).